The chain runs to 223 residues: Putative oxidoreductase MT1904 (223 aa).

An NADP(+)-binding site is contributed by 4 to 28 (LVTGGDTDLGRTMAEGFRNDGHKVT). Ser128 contacts substrate.

It belongs to the short-chain dehydrogenases/reductases (SDR) family.

The chain is Putative oxidoreductase MT1904 from Mycobacterium tuberculosis (strain CDC 1551 / Oshkosh).